The sequence spans 232 residues: MAGRATATATAAGKDRSSFAVTCSLLSQFLKEKKGGGGGLQGLGLGLRPAPAAPPAAGAGGAFRPPPTTMNLLSGLDAPAVEVEPNTADTAADELPLIKAPADQQSDESASEAAGEKAQQLTIFYGGKVVVFENFPSTKVKDLLQIVSTGDGVDKNTGTAATQSLPRPAHNSLPDLPIARRNSLHRFLEKRKGRMNANAPYQANCTAAPSKQANGDKSWLGFGQEMTIKQEI.

A disordered region spans residues 54-73 (PPAAGAGGAFRPPPTTMNLL). Positions 114–149 (AGEKAQQLTIFYGGKVVVFENFPSTKVKDLLQIVST) constitute a Tify domain. A disordered region spans residues 151-176 (DGVDKNTGTAATQSLPRPAHNSLPDL). Over residues 156–165 (NTGTAATQSL) the composition is skewed to polar residues. Positions 177–202 (PIARRNSLHRFLEKRKGRMNANAPYQ) match the Jas motif. Residues 179–186 (ARRNSLHR) carry the Nuclear localization signal motif.

The protein belongs to the TIFY/JAZ family. Interacts with BHLH148. Interacts with COI1B in a coronatine-dependent manner. Coronatine is an analog of jasmonoyl isoleucine (JA-Ile). Interacts with TIFY5/JAZ2, TIFY6B/JAZ4, TIFY9/JAZ5, TIFY11A, TIFY11D/JAZ12 and TIFY11G/JAZ15. Ubiquitinated. Increase in jasmonoyl isoleucine (JA-Ile) levels mediates its degradation via COI1B-mediated proteasome pathway.

It is found in the nucleus. It localises to the cytoplasm. Its subcellular location is the cytosol. Its function is as follows. Repressor of jasmonate (JA) responses. Acts as a repressor of JA-induced resistance to the bacterial blight pathogen Xanthomonas oryzae pv. oryzae (Xoo). Regulates JA-induced accumulation of linalool at the transcriptional level of linalool synthase gene LIS. Linalool is important for resistance to bacterial blight pathogen Xoo. The polypeptide is Protein TIFY 10c (Oryza sativa subsp. indica (Rice)).